We begin with the raw amino-acid sequence, 228 residues long: Sodium channel regulatory subunit beta-4 (228 aa).

Residues 1–30 (MPGARDQGAARARWLGIGLLGLFLLPVSLS) form the signal peptide. Residues 31–148 (LEVSVGKATT…NDFQHQATIF (118 aa)) enclose the Ig-like C2-type domain. Residues 31 to 162 (LEVSVGKATT…DKLEEVDNTV (132 aa)) lie on the Extracellular side of the membrane. Asn45, Asn71, and Asn113 each carry an N-linked (GlcNAc...) asparagine glycan. Cysteines 53 and 131 form a disulfide. A helical membrane pass occupies residues 163–183 (TLIILGVVGGVIGLLIFILLV). At 184 to 228 (KKFIAFIIKKTQEKKKECLVSSSGNDNTENGLPGSKAEEKAPTKV) the chain is on the cytoplasmic side. The segment at 198 to 228 (KKECLVSSSGNDNTENGLPGSKAEEKAPTKV) is disordered. Residues 203 to 213 (VSSSGNDNTEN) show a composition bias toward polar residues. A compositionally biased stretch (basic and acidic residues) spans 219–228 (KAEEKAPTKV).

The protein belongs to the sodium channel auxiliary subunit SCN4B (TC 8.A.17) family. A voltage-gated sodium (Nav) channel consists of an ion-conducting pore-forming alpha subunit functional on its own that is regulated by one or more beta subunits. The beta subunit SCN4B is disulfide-linked to the pore-forming alpha subunit. Interacts with SCN1A; regulatory subunit of SCN1A/Nav1.1. Interacts with SCN2A; regulatory subunit of SCN2A/Nav1.2. Post-translationally, contains an interchain disulfide bond with SCN2A.

It is found in the cell membrane. In terms of biological role, regulatory subunit of multiple voltage-gated sodium (Nav) channels directly mediating the depolarization of excitable membranes. Navs, also called VGSCs (voltage-gated sodium channels) or VDSCs (voltage-dependent sodium channels), operate by switching between closed and open conformations depending on the voltage difference across the membrane. In the open conformation they allow Na(+) ions to selectively pass through the pore, along their electrochemical gradient. The influx of Na+ ions provokes membrane depolarization, initiating the propagation of electrical signals throughout cells and tissues. The accessory beta subunits participate in localization and functional modulation of the Nav channels. Modulates the activity of SCN1A/Nav1.1. Modulates the activity of SCN2A/Nav1.2. In Bos taurus (Bovine), this protein is Sodium channel regulatory subunit beta-4.